A 677-amino-acid polypeptide reads, in one-letter code: Methionine--tRNA ligase (677 aa).

A 'HIGH' region motif is present at residues 15-25 (PYANGSIHLGH). The Zn(2+) site is built by cysteine 146, cysteine 149, cysteine 159, and cysteine 162. The 'KMSKS' region motif lies at 333-337 (KMSKS). Lysine 336 is an ATP binding site. The tRNA-binding domain occupies 575 to 677 (DFAKVDLRVA…DGAKPGQQVK (103 aa)).

This sequence belongs to the class-I aminoacyl-tRNA synthetase family. MetG type 1 subfamily. In terms of assembly, homodimer. Zn(2+) is required as a cofactor.

The protein localises to the cytoplasm. The enzyme catalyses tRNA(Met) + L-methionine + ATP = L-methionyl-tRNA(Met) + AMP + diphosphate. Its function is as follows. Is required not only for elongation of protein synthesis but also for the initiation of all mRNA translation through initiator tRNA(fMet) aminoacylation. This chain is Methionine--tRNA ligase, found in Salmonella arizonae (strain ATCC BAA-731 / CDC346-86 / RSK2980).